Here is a 306-residue protein sequence, read N- to C-terminus: Methionyl-tRNA formyltransferase (306 aa).

Ser-105–Pro-108 is a (6S)-5,6,7,8-tetrahydrofolate binding site.

Belongs to the Fmt family.

The catalysed reaction is L-methionyl-tRNA(fMet) + (6R)-10-formyltetrahydrofolate = N-formyl-L-methionyl-tRNA(fMet) + (6S)-5,6,7,8-tetrahydrofolate + H(+). Functionally, attaches a formyl group to the free amino group of methionyl-tRNA(fMet). The formyl group appears to play a dual role in the initiator identity of N-formylmethionyl-tRNA by promoting its recognition by IF2 and preventing the misappropriation of this tRNA by the elongation apparatus. The polypeptide is Methionyl-tRNA formyltransferase (Rubrobacter xylanophilus (strain DSM 9941 / JCM 11954 / NBRC 16129 / PRD-1)).